Consider the following 77-residue polypeptide: Chassatide C2 (77 aa).

An N-terminal signal peptide occupies residues 1-24 (MAKFANYLMLFLLVASLVMLEAQS). Residues 25 to 44 (SDTIKVPDLGKRLLMNRDPN) constitute a propeptide, removed in mature form. A cross-link (cyclopeptide (Gly-Asn)) is located at residues 45-75 (GIPCAESCVWIPCTITALMGCSCKNNVCYNN). 3 disulfide bridges follow: cysteine 48–cysteine 65, cysteine 52–cysteine 67, and cysteine 57–cysteine 72. Methionine 63 bears the Methionine sulfoxide; in form chassatide chaC2A mark. Positions 76–77 (EL) are cleaved as a propeptide — removed in mature form.

Belongs to the cyclotide family. Bracelet subfamily. This is a cyclic peptide. In terms of tissue distribution, expressed in fruit, pedicel and stem but not in leaf and root (at protein level).

Chassatide C2: Probably participates in a plant defense mechanism. Has no activity against bacteria up to a concentration of 80 uM. Has cytotoxic but no hemolytic activity. Functionally, chassatide C2A: Probably participates in a plant defense mechanism. Has no activity against bacteria up to a concentration of 80 uM. Has no cytotoxic and no hemolytic activity. The protein is Chassatide C2 of Chassalia chartacea (Chassalia curviflora).